Consider the following 327-residue polypeptide: Thiosulfate dehydrogenase (327 aa).

An N-terminal signal peptide occupies residues 1 to 26 (MKIIPYRKRSVLIATIFAISAVGITG). A compositionally biased stretch (low complexity) spans 66 to 78 (NDMTATAGGTDTA). Residues 66–93 (NDMTATAGGTDTASGKPTIKMPDESTIP) are disordered. Cytochrome c domains follow at residues 99 to 196 (AAVR…SWLS) and 219 to 305 (PNTD…THLP). Heme c is bound by residues Cys-125, Cys-128, His-129, Cys-232, Cys-235, and His-236.

In terms of assembly, monomer. Post-translationally, binds 2 heme c groups covalently per subunit.

Its subcellular location is the periplasm. It carries out the reaction 2 thiosulfate + 2 Fe(III)-[cytochrome c] = tetrathionate + 2 Fe(II)-[cytochrome c] + 2 H(+). In terms of biological role, catalyzes the oxidation of 2 molecules of thiosulfate to tetrathionate. The sequence is that of Thiosulfate dehydrogenase (tsdA) from Psychrobacter arcticus (strain DSM 17307 / VKM B-2377 / 273-4).